Reading from the N-terminus, the 102-residue chain is MSVSKQHVVRLYRNILKTSKLFPYTYREYTIRRTRDKFKELKVESDPAKFEQGIKDSEKLLEIIQRQSIINGMYNKRNLVVEGIDDTAEGEVKKSFENASQS.

This sequence belongs to the complex I LYR family.

The protein resides in the mitochondrion. Its function is as follows. Required for mitochondrial iron-sulfur (Fe-S) protein biosynthesis. The protein is Protein isd11 (isd11) of Schizosaccharomyces pombe (strain 972 / ATCC 24843) (Fission yeast).